Here is a 313-residue protein sequence, read N- to C-terminus: Ribosomal RNA small subunit methyltransferase H (313 aa).

S-adenosyl-L-methionine is bound by residues 35 to 37 (GGH), D55, F79, D101, and Q108.

Belongs to the methyltransferase superfamily. RsmH family.

It localises to the cytoplasm. It carries out the reaction cytidine(1402) in 16S rRNA + S-adenosyl-L-methionine = N(4)-methylcytidine(1402) in 16S rRNA + S-adenosyl-L-homocysteine + H(+). In terms of biological role, specifically methylates the N4 position of cytidine in position 1402 (C1402) of 16S rRNA. The protein is Ribosomal RNA small subunit methyltransferase H of Edwardsiella ictaluri (strain 93-146).